A 1235-amino-acid chain; its full sequence is Major DNA-binding protein (1235 aa).

The disordered stretch occupies residues 536–584 (GGLDGKGDDGVPGGGAGGGGGRDVSGGPSDGLGGGRGGGGGGDSGGMMG). Residues 545-584 (GVPGGGAGGGGGRDVSGGPSDGLGGGRGGGGGGDSGGMMG) are compositionally biased toward gly residues. The Required for filament formation motif lies at 846–847 (FW). Residues 1214-1226 (GVGGSSGGGGGSG) are compositionally biased toward gly residues. The tract at residues 1214 to 1235 (GVGGSSGGGGGSGLLPAKRSRL) is disordered. The segment at 1232-1235 (RSRL) is required for nuclear localization.

Belongs to the herpesviridae major DNA-binding protein family. As to quaternary structure, homooligomers. Forms double-helical filaments necessary for the formation of replication compartments within the host nucleus. Interacts with the origin-binding protein. Interacts with the helicase primase complex; this interaction stimulates primer synthesis activity of the helicase-primase complex. Interacts with the DNA polymerase. Interacts with the alkaline exonuclease; this interaction increases its nuclease processivity.

It is found in the host nucleus. In terms of biological role, plays several crucial roles in viral infection. Participates in the opening of the viral DNA origin to initiate replication by interacting with the origin-binding protein. May disrupt loops, hairpins and other secondary structures present on ssDNA to reduce and eliminate pausing of viral DNA polymerase at specific sites during elongation. Promotes viral DNA recombination by performing strand-transfer, characterized by the ability to transfer a DNA strand from a linear duplex to a complementary single-stranded DNA circle. Can also catalyze the renaturation of complementary single strands. Additionally, reorganizes the host cell nucleus, leading to the formation of prereplicative sites and replication compartments. This process is driven by the protein which can form double-helical filaments in the absence of DNA. This is Major DNA-binding protein from Homo sapiens (Human).